Here is a 690-residue protein sequence, read N- to C-terminus: Guanylate cyclase soluble subunit alpha-1 (690 aa).

Position 266 is a phosphoserine (S266). Positions T480–E607 constitute a Guanylate cyclase domain.

This sequence belongs to the adenylyl cyclase class-4/guanylyl cyclase family. As to quaternary structure, the active enzyme is formed by a heterodimer of an alpha and a beta subunit. Heterodimer with GUCY1B1. Requires Mg(2+) as cofactor. Mn(2+) serves as cofactor.

The protein resides in the cytoplasm. It catalyses the reaction GTP = 3',5'-cyclic GMP + diphosphate. Activated by nitric oxide in the presence of magnesium or manganese ions. The polypeptide is Guanylate cyclase soluble subunit alpha-1 (Gucy1a1) (Rattus norvegicus (Rat)).